Reading from the N-terminus, the 567-residue chain is uncharacterized protein (567 aa).

The interval 1-26 (MPSEKATTRHLPGAVETLSPRTGRRP) is disordered. The next 6 membrane-spanning stretches (helical) occupy residues 57–77 (AILV…TVAF), 90–110 (VSFG…TYWL), 142–162 (VALA…IIYG), 173–193 (LFSM…LTEF), 221–241 (MLVW…TAIF), and 257–277 (VLIL…ILAW). Positions 277–329 (WLTATPVRVVREALNRVEQGDLSGDLVVFDGTELGELQRGFNRMVEGLRERER) constitute an HAMP domain. One can recognise a Guanylate cyclase domain in the interval 361-485 (AVVFVDIVGS…EPVNEAARLC (125 aa)).

The protein belongs to the adenylyl cyclase class-3 family.

The protein resides in the cell membrane. This is an uncharacterized protein from Mycobacterium bovis (strain ATCC BAA-935 / AF2122/97).